The chain runs to 408 residues: Argininosuccinate synthase (408 aa).

ATP is bound at residue 14–22 (AYSGGLDTS). Positions 92 and 97 each coordinate L-citrulline. Position 122 (Gly-122) interacts with ATP. Residues Thr-124, Asn-128, and Asp-129 each coordinate L-aspartate. Asn-128 contributes to the L-citrulline binding site. The L-citrulline site is built by Arg-132, Ser-181, Ser-190, Glu-266, and Tyr-278.

The protein belongs to the argininosuccinate synthase family. Type 1 subfamily. Homotetramer.

Its subcellular location is the cytoplasm. It carries out the reaction L-citrulline + L-aspartate + ATP = 2-(N(omega)-L-arginino)succinate + AMP + diphosphate + H(+). It participates in amino-acid biosynthesis; L-arginine biosynthesis; L-arginine from L-ornithine and carbamoyl phosphate: step 2/3. In Moorella thermoacetica (strain ATCC 39073 / JCM 9320), this protein is Argininosuccinate synthase.